Consider the following 1001-residue polypeptide: E3 ubiquitin-protein ligase etc-1 (1001 aa).

One can recognise an IQ domain in the interval 28-57 (QEKAARKVQKFWRGHRVQHNQRLLFRAEFD). Residues 66 to 115 (LEETIKMAQLLVNFYETNKDEERLVMTLSELVKLKTSDKEFEKRIRETQR) are a coiled coil. The 344-residue stretch at 658–1001 (KVNDLKSMVR…INSGAGFELA (344 aa)) folds into the HECT domain. Cys969 acts as the Glycyl thioester intermediate in catalysis.

As to quaternary structure, interacts with ify-1 and cyb-1.

It catalyses the reaction S-ubiquitinyl-[E2 ubiquitin-conjugating enzyme]-L-cysteine + [acceptor protein]-L-lysine = [E2 ubiquitin-conjugating enzyme]-L-cysteine + N(6)-ubiquitinyl-[acceptor protein]-L-lysine.. The protein operates within protein modification; protein ubiquitination. Its function is as follows. E3 ubiquitin-protein ligase that accepts ubiquitin from E2 ubiquitin-conjugating enzymes, such as ubc-18, in the form of a thioester and then directly transfers the ubiquitin to targeted substrates. Ubiquitinates ify-1 and cyb-1 targeting them for degradation in post-meiotic embryos. The chain is E3 ubiquitin-protein ligase etc-1 from Caenorhabditis elegans.